A 161-amino-acid chain; its full sequence is Cyclic pyranopterin monophosphate synthase (161 aa).

Residues 75–77 (LCH) and 113–114 (ME) each bind substrate. D128 is an active-site residue.

The protein belongs to the MoaC family. As to quaternary structure, homohexamer; trimer of dimers.

It carries out the reaction (8S)-3',8-cyclo-7,8-dihydroguanosine 5'-triphosphate = cyclic pyranopterin phosphate + diphosphate. The protein operates within cofactor biosynthesis; molybdopterin biosynthesis. Its function is as follows. Catalyzes the conversion of (8S)-3',8-cyclo-7,8-dihydroguanosine 5'-triphosphate to cyclic pyranopterin monophosphate (cPMP). This Erwinia tasmaniensis (strain DSM 17950 / CFBP 7177 / CIP 109463 / NCPPB 4357 / Et1/99) protein is Cyclic pyranopterin monophosphate synthase.